Consider the following 1883-residue polypeptide: AF4/FMR2 family member lilli (1883 aa).

Positions 1-45 are enriched in low complexity; that stretch reads MAQQQQQQHLQQQQQQHHQQQQLQQLQQQQQLPQYNNNLYNLNYN. 17 disordered regions span residues 1 to 88, 140 to 311, 329 to 381, 449 to 540, 609 to 654, 796 to 827, 844 to 901, 922 to 962, 992 to 1018, 1039 to 1075, 1115 to 1145, 1170 to 1238, 1358 to 1413, 1450 to 1510, 1543 to 1583, 1595 to 1641, and 1783 to 1803; these read MAQQ…SEGD, INST…EKDI, SIAA…SCTT, MPTP…HHQH, LGGG…HLSR, SISS…TLQI, MQQK…KKHA, TAAA…LAKG, VAGS…LHAA, TAAA…ATAT, KNNR…QHKQ, QHQQ…KSDK, YAAE…GART, EHGV…DQVS, ANGS…KATT, QTST…PPSD, and PSNS…RIVP. The segment covering 57 to 80 has biased composition (basic and acidic residues); sequence REKYERQQGIQSDDRETSLFEAPR. Low complexity-rich tracts occupy residues 140–154, 161–178, 223–253, and 362–381; these read INST…SLLP, QQQQ…QQQQ, SASS…ASTA, and PLNS…SCTT. Over residues 450–462 the composition is skewed to pro residues; sequence PTPPKASPTPPTA. Thr458 carries the phosphothreonine modification. Residues 466–479 are compositionally biased toward basic and acidic residues; it reads LKSEKNHSLEKQDS. A compositionally biased stretch (acidic residues) spans 481–491; the sequence is LENDLELSESD. A phosphoserine mark is found at Ser488 and Ser490. Residues 500-540 show a composition bias toward low complexity; the sequence is SAGNSSNSSETDSSESGSEASSKGEAQQQQQQQQQLLHHQH. Gly residues predominate over residues 609–625; it reads LGGGGGSGSTGGGGGSS. Low complexity-rich tracts occupy residues 626–639 and 796–813; these read SSGM…SSSN and SISS…SAAG. Residues 867-877 show a composition bias toward basic residues; sequence PRQKKPRKKKM. A phosphoserine mark is found at Ser887 and Ser888. The segment at residues 930–942 is a DNA-binding region (a.T hook); it reads KKGRGRPRKQQQQ. Over residues 939 to 962 the composition is skewed to low complexity; it reads QQQQLQQTQSGNLSSASAGSLAKG. A phosphoserine mark is found at Ser953 and Ser955. 5 stretches are compositionally biased toward low complexity: residues 1124-1145, 1170-1186, 1200-1222, 1362-1376, and 1385-1399; these read SSSN…QHKQ, QHQQ…QQQQ, SSSS…SSSS, QQQQ…QQLH, and HYQQ…KAQQ. Over residues 1450-1467 the composition is skewed to basic and acidic residues; that stretch reads EHGVKPEPELDAGYEAKY. The residue at position 1546 (Ser1546) is a Phosphoserine. Thr1548 is modified (phosphothreonine). Low complexity-rich tracts occupy residues 1558 to 1583 and 1595 to 1606; these read QQQQ…KATT and QTSTTATQQPTT. Positions 1614–1625 are enriched in pro residues; the sequence is TPPPVAPPPPPR. Residues 1783–1794 show a composition bias toward low complexity; that stretch reads PSNSVGSQGSGS.

It belongs to the AF4 family.

The protein resides in the nucleus. Functionally, has a role in transcriptional regulation. Acts in parallel with the Ras/MAPK and the PI3K/PKB pathways in the control of cell identity and cellular growth. Essential for regulation of the cytoskeleton and cell growth but not for cell proliferation or growth rate. Required specifically for the microtubule-based basal transport of lipid droplets. Plays a partially redundant function downstream of Raf in cell fate specification in the developing eye. Pair-rule protein that regulates embryonic cellularization, gastrulation and segmentation. This chain is AF4/FMR2 family member lilli, found in Drosophila grimshawi (Hawaiian fruit fly).